A 295-amino-acid polypeptide reads, in one-letter code: Cyclin-G1 (295 aa).

Belongs to the cyclin family. Cyclin G subfamily.

Its subcellular location is the nucleus. Its function is as follows. May play a role in growth regulation. Is associated with G2/M phase arrest in response to DNA damage. May be an intermediate by which p53 mediates its role as an inhibitor of cellular proliferation. The polypeptide is Cyclin-G1 (CCNG1) (Sus scrofa (Pig)).